Reading from the N-terminus, the 361-residue chain is Chorismate synthase (361 aa).

Residues arginine 48 and arginine 54 each coordinate NADP(+). Residues 125–127 (RSS), 238–239 (NA), glycine 278, 293–297 (KPTSS), and arginine 319 contribute to the FMN site.

It belongs to the chorismate synthase family. In terms of assembly, homotetramer. FMNH2 serves as cofactor.

It catalyses the reaction 5-O-(1-carboxyvinyl)-3-phosphoshikimate = chorismate + phosphate. It participates in metabolic intermediate biosynthesis; chorismate biosynthesis; chorismate from D-erythrose 4-phosphate and phosphoenolpyruvate: step 7/7. Functionally, catalyzes the anti-1,4-elimination of the C-3 phosphate and the C-6 proR hydrogen from 5-enolpyruvylshikimate-3-phosphate (EPSP) to yield chorismate, which is the branch point compound that serves as the starting substrate for the three terminal pathways of aromatic amino acid biosynthesis. This reaction introduces a second double bond into the aromatic ring system. The chain is Chorismate synthase from Edwardsiella ictaluri (strain 93-146).